Consider the following 571-residue polypeptide: Hemagglutinin-neuraminidase (571 aa).

At 1 to 26 the chain is on the intravirion side; that stretch reads MDRAVNRVVLENEEREAKNTWRLVFR. A helical membrane pass occupies residues 27–47; it reads IAVLLLMVMTLAISAAALVYS. Topologically, residues 48 to 571 are virion surface; that stretch reads MGASTPRDLA…LVEILKDDRV (524 aa). An N-linked (GlcNAc...) asparagine; by host glycan is attached at Asn119. Residues 124–152 form an important for interaction with fusion/F protein region; it reads GEPVHDPDYIGGIGKELIVDDISDVTSFY. Intrachain disulfides connect Cys172/Cys196, Cys186/Cys247, and Cys238/Cys251. The interval 234-239 is involved in neuraminidase activity; that stretch reads NRKSCS. N-linked (GlcNAc...) asparagine; by host glycans are attached at residues Asn341 and Asn433. 2 cysteine pairs are disulfide-bonded: Cys344/Cys461 and Cys455/Cys465. N-linked (GlcNAc...) asparagine; by host glycosylation is found at Asn481, Asn508, and Asn538. A disulfide bridge links Cys531 with Cys542.

It belongs to the paramyxoviruses hemagglutinin-neuraminidase family. Homotetramer; composed of disulfide-linked homodimers. Interacts with F protein trimer. Interacts with host CG-1B; this interaction inhibits viral adsorption and replication rather than internalization.

It is found in the virion membrane. The protein resides in the host cell membrane. It carries out the reaction Hydrolysis of alpha-(2-&gt;3)-, alpha-(2-&gt;6)-, alpha-(2-&gt;8)- glycosidic linkages of terminal sialic acid residues in oligosaccharides, glycoproteins, glycolipids, colominic acid and synthetic substrates.. Functionally, mediates the viral entry into the host cell together with fusion/F protein. Attaches the virus to sialic acid-containing cell receptors and thereby initiates infection. Binding of HN protein to the receptor induces a conformational change that allows the F protein to trigger virion/cell membranes fusion. Its function is as follows. Neuraminidase activity ensures the efficient spread of the virus by dissociating the mature virions from the neuraminic acid containing glycoproteins. The sequence is that of Hemagglutinin-neuraminidase (HN) from Gallus gallus (Chicken).